Reading from the N-terminus, the 264-residue chain is Replication-associated protein A (264 aa).

A CRESS-DNA virus Rep endonuclease domain is found at 10–123; that stretch reads RVYSKYLFLT…DVNTAEWGTF (114 aa). The RCR-1 signature appears at 17–20; that stretch reads FLTY. A divalent metal cation-binding residues include Glu-51, His-59, and His-61. The RCR-2 signature appears at 59-61; the sequence is HLH. The active-site For DNA cleavage activity is Tyr-106. An RCR-3 motif is present at residues 106-109; the sequence is YITK. Position 110 (Glu-110) interacts with a divalent metal cation. Residues 173–185 are oligomerization; it reads TARHLFPDPVATY. An LXCXE motif, interaction with host RBR1 motif is present at residues 194–198; that stretch reads LICHE. Residues 237–264 form a disordered region; that stretch reads YSRSHRGGISPSTSAGQPEQERLPGQGL.

Belongs to the geminiviridae Rep protein family. Homooligomer. Interacts (via LXCXE domain) with host retinoblastoma-related protein 1 (RBR1), and may thereby deregulate the host cell cycle. Part of the C- and V-complexes which are RepA-Rep-DNA complexes involved in the c-sense and v-sense transcription. Mg(2+) serves as cofactor. Mn(2+) is required as a cofactor.

Its subcellular location is the host nucleus. The protein localises to the host cytoplasm. Implicated in enhancement of V-sense gene expression. Acts a an inhibitor of C-sense gene transcription. The sequence is that of Replication-associated protein A from Wheat dwarf virus (isolate Sweden) (WDV).